A 396-amino-acid chain; its full sequence is Ribosomal RNA large subunit methyltransferase I (396 aa).

Residues 2–81 enclose the PUA domain; that stretch reads SVRLVLAKGR…ESIDIAFFSR (80 aa).

This sequence belongs to the methyltransferase superfamily. RlmI family.

The protein resides in the cytoplasm. The enzyme catalyses cytidine(1962) in 23S rRNA + S-adenosyl-L-methionine = 5-methylcytidine(1962) in 23S rRNA + S-adenosyl-L-homocysteine + H(+). Specifically methylates the cytosine at position 1962 (m5C1962) of 23S rRNA. The sequence is that of Ribosomal RNA large subunit methyltransferase I from Escherichia coli (strain K12 / MC4100 / BW2952).